The sequence spans 235 residues: Adenosine 5'-phosphosulfate reductase (235 aa).

The [4Fe-4S] cluster site is built by C121, C122, C204, and C207. C230 functions as the Nucleophile; cysteine thiosulfonate intermediate in the catalytic mechanism.

It belongs to the PAPS reductase family. CysH subfamily. [4Fe-4S] cluster is required as a cofactor.

Its subcellular location is the cytoplasm. The enzyme catalyses [thioredoxin]-disulfide + sulfite + AMP + 2 H(+) = adenosine 5'-phosphosulfate + [thioredoxin]-dithiol. The protein operates within sulfur metabolism; hydrogen sulfide biosynthesis; sulfite from sulfate. Its function is as follows. Catalyzes the formation of sulfite from adenosine 5'-phosphosulfate (APS) using thioredoxin as an electron donor. This Geobacillus thermodenitrificans (strain NG80-2) protein is Adenosine 5'-phosphosulfate reductase.